The primary structure comprises 187 residues: F-box protein At5g41720 (187 aa).

The F-box domain occupies 2–49 (MMNSPLDYDVLLEIMSYCPATEMAKFRLLSKECNKRSYEMSFINRHLH).

The protein is F-box protein At5g41720 of Arabidopsis thaliana (Mouse-ear cress).